The chain runs to 339 residues: NADP-dependent dehydrogenase M3 (339 aa).

NADP(+) contacts are provided by S49, I51, D93, Y206, K210, I240, and Q244. The Proton acceptor role is filled by Y206. The Lowers pKa of active site Tyr role is filled by K210.

This sequence belongs to the short-chain dehydrogenases/reductases (SDR) family. In terms of assembly, homodimer.

The protein resides in the cytoplasm. It localises to the cytosol. Its pathway is secondary metabolite biosynthesis. Its function is as follows. NADP-dependent dehydrogenase; part of the gene cluster that mediates the biosynthesis of squalestatin S1 (SQS1, also known as zaragozic acid A), a heavily oxidized fungal polyketide that offers potent cholesterol lowering activity by targeting squalene synthase (SS). SQS1 is composed of a 2,8-dioxobicyclic[3.2.1]octane-3,4,5-tricarboxyclic acid core that is connected to two lipophilic polyketide arms. These initial steps feature the priming of an unusual benzoic acid starter unit onto the highly reducing polyketide synthase pks2, followed by oxaloacetate extension and product release to generate a tricarboxylic acid containing product. The phenylalanine ammonia lyase (PAL) M7 and the acyl-CoA ligase M9 are involved in transforming phenylalanine into benzoyl-CoA. The citrate synthase-like protein R3 is involved in connecting the C-alpha-carbons of the hexaketide chain and oxaloacetate to afford the tricarboxylic acid unit. The potential hydrolytic enzymes, M8 and M10, are in close proximity to pks2 and may participate in product release. On the other side, the tetraketide arm is synthesized by a the squalestatin tetraketide synthase pks1 and enzymatically esterified to the core in the last biosynthetic step, by the acetyltransferase M4. The biosynthesis of the tetraketide must involve 3 rounds of chain extension. After the first and second rounds methyl-transfer occurs, and in all rounds of extension the ketoreductase and dehydratase are active. The enoyl reductase and C-MeT of pks1 are not active in the final round of extension. The acetyltransferase M4 appears to have a broad substrate selectivity for its acyl CoA substrate, allowing the in vitro synthesis of novel squalestatins. The biosynthesis of SQS1 requires several oxidative steps likely performed by oxidoreductases M1, R1 and R2. Finally, in support of the identification of the cluster as being responsible for SQS1 production, the cluster contains a gene encoding a putative squalene synthase (SS) R6, suggesting a likely mechanism for self-resistance. The protein is NADP-dependent dehydrogenase M3 of Phoma sp. (strain ATCC 20986 / MF5453).